Consider the following 349-residue polypeptide: uncharacterized protein (349 aa).

10 helical membrane passes run 15 to 35 (VHSP…NPVT), 53 to 73 (ISFC…MILI), 91 to 111 (WFLL…LMFS), 120 to 140 (NVVL…ILLL), 147 to 167 (LSMV…FWGV), 179 to 199 (FGLG…TTIL), 218 to 238 (LLGT…DHFM), 248 to 268 (WMLI…LAGL), 276 to 296 (INLA…LILL), and 302 to 322 (AQYL…IDNL). 2 consecutive EamA domains span residues 39–164 (IELG…VTVF) and 191–319 (FISA…LSFI).

The protein belongs to the EamA transporter family.

It is found in the cell membrane. This is an uncharacterized protein from Synechocystis sp. (strain ATCC 27184 / PCC 6803 / Kazusa).